A 589-amino-acid chain; its full sequence is uncharacterized protein (589 aa).

Transmembrane regions (helical) follow at residues 90 to 110 (YIVIPGLMLSIFLAALDQTVI), 128 to 148 (SWIGTAYSLAETSILPFCGIM), 162 to 182 (IVLFLFGSAMCGAAQNMLWLV), 189 to 209 (GIGGGGIMSLVTIVIADITPL), 217 to 237 (GCMGVTWGVASVMGPLIGGAI), 245 to 265 (WIFFINLPTGGLSLALLIFFL), 284 to 304 (FVGIVTITTGVVLFLLGLNIG), 311 to 331 (AHANVLCYLIFGILCIAGFVV), 355 to 375 (VMVTSFLHYYIMSTVTYYIPI), 390 to 410 (VHTLSLAVVSSVVSAISGMGI), 418 to 438 (YPMIGGWIVLLAGTGSMIAIY), 448 to 468 (GFLALTAVGIGNLFQPNLIAI), 483 to 503 (AFMLLRNMGASVGISIGAVIY), and 545 to 565 (IRTIWIVNCPVAGVGMLLSFF).

It belongs to the major facilitator superfamily. TCR/Tet family.

The protein localises to the membrane. This is an uncharacterized protein from Schizosaccharomyces pombe (strain 972 / ATCC 24843) (Fission yeast).